The following is a 639-amino-acid chain: DNA gyrase subunit B (639 aa).

Residues 392 to 402 (QAEELTRRKSA) show a composition bias toward basic and acidic residues. The interval 392-416 (QAEELTRRKSALESTSLPGKLADCQ) is disordered. Residues 423–537 (SELFIVEGDS…AGYVYAAQPP (115 aa)) enclose the Toprim domain. 3 residues coordinate Mg(2+): Glu429, Asp502, and Asp504. Lys624 participates in a covalent cross-link: Glycyl lysine isopeptide (Lys-Gly) (interchain with G-Cter in SAMP2).

The protein belongs to the type II topoisomerase GyrB family. As to quaternary structure, heterotetramer, composed of two GyrA and two GyrB chains. In the heterotetramer, GyrA contains the active site tyrosine that forms a transient covalent intermediate with DNA, while GyrB binds cofactors and catalyzes ATP hydrolysis. It depends on Mg(2+) as a cofactor. Requires Mn(2+) as cofactor. Ca(2+) is required as a cofactor.

It localises to the cytoplasm. The catalysed reaction is ATP-dependent breakage, passage and rejoining of double-stranded DNA.. A type II topoisomerase that negatively supercoils closed circular double-stranded (ds) DNA in an ATP-dependent manner to modulate DNA topology and maintain chromosomes in an underwound state. Negative supercoiling favors strand separation, and DNA replication, transcription, recombination and repair, all of which involve strand separation. Also able to catalyze the interconversion of other topological isomers of dsDNA rings, including catenanes and knotted rings. Type II topoisomerases break and join 2 DNA strands simultaneously in an ATP-dependent manner. This is DNA gyrase subunit B from Haloferax volcanii (strain ATCC 29605 / DSM 3757 / JCM 8879 / NBRC 14742 / NCIMB 2012 / VKM B-1768 / DS2) (Halobacterium volcanii).